Reading from the N-terminus, the 510-residue chain is Histone deacetylase 3 (510 aa).

Residues 24–338 (RRVCYFYDPE…WCYETGVALG (315 aa)) are histone deacetylase. Histidine 158 functions as the Proton donor/acceptor in the catalytic mechanism. 3 residues coordinate Zn(2+): aspartate 193, histidine 195, and aspartate 281. The segment at 394-510 (PSVQFQERIP…ARNEPGSSPK (117 aa)) is disordered. Basic and acidic residues-rich tracts occupy residues 418–434 (DERH…DHKP) and 448–472 (VKRE…HKGP). Residues 485 to 503 (APTADANAVAVNAPGNARN) show a composition bias toward low complexity.

It belongs to the histone deacetylase family. HD Type 1 subfamily. It depends on Zn(2+) as a cofactor. In terms of tissue distribution, expressed in roots.

The protein localises to the nucleus. It catalyses the reaction N(6)-acetyl-L-lysyl-[histone] + H2O = L-lysyl-[histone] + acetate. In terms of biological role, responsible for the deacetylation of lysine residues on the N-terminal part of the core histones (H2A, H2B, H3 and H4). Histone deacetylation gives a tag for epigenetic repression and plays an important role in transcriptional regulation, cell cycle progression and developmental events. Histone deacetylases act via the formation of large multiprotein complexes. In Oryza sativa subsp. japonica (Rice), this protein is Histone deacetylase 3.